The following is a 368-amino-acid chain: Zinc finger protein 24 (368 aa).

Lys22 participates in a covalent cross-link: Glycyl lysine isopeptide (Lys-Gly) (interchain with G-Cter in SUMO2). A Glycyl lysine isopeptide (Lys-Gly) (interchain with G-Cter in SUMO1); alternate cross-link involves residue Lys27. Lys27 is covalently cross-linked (Glycyl lysine isopeptide (Lys-Gly) (interchain with G-Cter in SUMO2); alternate). Positions 52–134 (RQRFRQFGYQ…TVLEDLESEL (83 aa)) constitute an SCAN box domain. Residues Ser132 and Ser142 each carry the phosphoserine modification. Residues Lys147, Lys177, and Lys236 each participate in a glycyl lysine isopeptide (Lys-Gly) (interchain with G-Cter in SUMO2) cross-link. A C2H2-type 1 zinc finger spans residues 251–273 (HICDECGKHFSQGSALILHQRIH). Residues 251–301 (HICDECGKHFSQGSALILHQRIHSGEKPYGCVECGKAFSRSSILVQHQRVH) are necessary and sufficient for nuclear localization. At Ser274 the chain carries Phosphoserine. Residues Lys277 and Lys286 each participate in a glycyl lysine isopeptide (Lys-Gly) (interchain with G-Cter in SUMO2) cross-link. 3 consecutive C2H2-type zinc fingers follow at residues 279-301 (YGCV…QRVH), 307-329 (YKCL…QRIH), and 335-357 (YECV…QRRH). Residue Ser292 is modified to Phosphoserine. Position 335 is a phosphotyrosine (Tyr335). Residues Lys361 and Lys367 each participate in a glycyl lysine isopeptide (Lys-Gly) (interchain with G-Cter in SUMO2) cross-link.

Belongs to the krueppel C2H2-type zinc-finger protein family. In terms of processing, sumoylated.

It is found in the nucleus. Its function is as follows. Transcription factor required for myelination of differentiated oligodendrocytes. Required for the conversion of oligodendrocytes from the premyelinating to the myelinating state. In the developing central nervous system (CNS), involved in the maintenance in the progenitor stage by promoting the cell cycle. Specifically binds to the 5'-TCAT-3' DNA sequence. Has transcription repressor activity in vitro. The polypeptide is Zinc finger protein 24 (Znf24) (Rattus norvegicus (Rat)).